The chain runs to 433 residues: Enolase 2 (433 aa).

A disordered region spans residues 34-56; that stretch reads RGMVPSGASTGEHEAVELRDGDK. A compositionally biased stretch (basic and acidic residues) spans 44-56; that stretch reads GEHEAVELRDGDK. Q163 contributes to the (2R)-2-phosphoglycerate binding site. The active-site Proton donor is E205. Residues D243, E290, and D317 each contribute to the Mg(2+) site. K342, R371, S372, and K393 together coordinate (2R)-2-phosphoglycerate. K342 serves as the catalytic Proton acceptor.

Belongs to the enolase family. Mg(2+) is required as a cofactor.

It is found in the cytoplasm. The protein resides in the secreted. It localises to the cell surface. It catalyses the reaction (2R)-2-phosphoglycerate = phosphoenolpyruvate + H2O. The protein operates within carbohydrate degradation; glycolysis; pyruvate from D-glyceraldehyde 3-phosphate: step 4/5. Functionally, catalyzes the reversible conversion of 2-phosphoglycerate (2-PG) into phosphoenolpyruvate (PEP). It is essential for the degradation of carbohydrates via glycolysis. The sequence is that of Enolase 2 from Lactococcus lactis subsp. cremoris (strain SK11).